A 270-amino-acid polypeptide reads, in one-letter code: Small ribosomal subunit protein eS1 (270 aa).

Disordered regions lie at residues 1–21 (MAVG…KKKV) and 238–270 (GGGK…QESV).

This sequence belongs to the eukaryotic ribosomal protein eS1 family. In terms of assembly, component of the small ribosomal subunit. Mature ribosomes consist of a small (40S) and a large (60S) subunit. The 40S subunit contains about 33 different proteins and 1 molecule of RNA (18S). The 60S subunit contains about 49 different proteins and 3 molecules of RNA (28S, 5.8S and 5S).

The protein resides in the cytoplasm. In Aedes aegypti (Yellowfever mosquito), this protein is Small ribosomal subunit protein eS1.